We begin with the raw amino-acid sequence, 499 residues long: MSSTQTRTDVILIGAGIMSATLGSLFKELVPEWNIKVFEKLDAAGEESSNEWNNAGTGHAALCELNYTTENADGTIDISKAVNVNEQFQISRQFWAHLVKQGLIENPGAFIRSIPHMSMVQGEKNVDFLKRRLEALTTNPLFEGMVLSDDPSQLQEWIPLIMDGRTSDEPIAATKIDSGTDVNFGALTRMLFDHLTSNGVELNYGHSVEDVKRLENGHWEVKVKDMSQNTIETHTAPFLFIGGGGGSLPLLQKTGIPESKQIGGFPVSGLFLVCKNREVIEQHHAKVYGKAKVGAPPMSVPHLDTRFIDGRKELLFGPFAGFTPKFLKTGSNLDLIRSVKPNNVITMLAAGAKEMPLTKYLIEQVLLSHDKRMDELREFIPNAKNEDWEIVVAGQRVQVIKDTPQGKGTLQFGTEVVSSEDGSVAALLGASPGASTAVHVMLKVLEQCFPQHLPEWEPKIKEMVPSYGLKLSEHPDLFKTIHESTAITLGLEEKDMVHN.

It belongs to the MQO family. FAD is required as a cofactor.

It catalyses the reaction (S)-malate + a quinone = a quinol + oxaloacetate. The protein operates within carbohydrate metabolism; tricarboxylic acid cycle; oxaloacetate from (S)-malate (quinone route): step 1/1. This is Probable malate:quinone oxidoreductase from Exiguobacterium sp. (strain ATCC BAA-1283 / AT1b).